The following is a 666-amino-acid chain: Collagen alpha-1(XXV) chain (666 aa).

Residues 1–24 (MLVKKLAGKGGGRESGSEDPRPLG) are disordered. Topologically, residues 1–33 (MLVKKLAGKGGGRESGSEDPRPLGQRCAGTMPS) are cytoplasmic. The span at 11–21 (GGRESGSEDPR) shows a compositional bias: basic and acidic residues. The helical; Signal-anchor for type II membrane protein transmembrane segment at 34-54 (CTALATLLSVVAVAFCFYLGV) threads the bilayer. Residues 55–666 (KTNDLQARIA…GLPMPGCWQK (612 aa)) lie on the Extracellular side of the membrane. Residues 116–168 (LECNCPAGPPGKRGKRGRRGESGPPGQPGPQGPPGPKGDKGEQGDQGPRMVFP) form a disordered region. Residues 121–164 (PAGPPGKRGKRGRRGESGPPGQPGPQGPPGPKGDKGEQGDQGPR) form the Collagen-like 1 domain. The segment covering 140–151 (PGQPGPQGPPGP) has biased composition (pro residues). The segment at 181 to 188 (LIKRRLIK) is interaction with amyloid-beta peptide. Disordered stretches follow at residues 189–428 (GDQG…ATEI) and 445–666 (LTVT…CWQK). 7 Collagen-like domains span residues 192–247 (GQAG…QKGS), 249–308 (GAPG…PGSS), 311–370 (GIKG…AGPP), 373–425 (GERG…DPGA), 455–514 (GPQG…KGEK), 529–588 (GPPG…KGAM), and 589–648 (GEPG…DGLD). Pro residues predominate over residues 196 to 208 (PPGPPGPPGPRGP). The span at 230–245 (PGEQGLMGPLGPPGQK) shows a compositional bias: low complexity. Residues 280–290 (EPGKEGEKGDA) are compositionally biased toward basic and acidic residues. Residues 336–358 (LPGIKGEPGFIGPQGEPGLPGLP) are compositionally biased toward low complexity. Basic and acidic residues-rich tracts occupy residues 361–377 (KGDR…ERGD) and 398–407 (SKGDRGDKGD). Low complexity predominate over residues 457–466 (QGLQGPKGEQ). The segment covering 494 to 503 (GEKGGLGLPG) has biased composition (gly residues). Residues 528–543 (IGPPGPPGPHGPPGPM) show a composition bias toward pro residues. Over residues 615–638 (RGEKGDLGEKGEKGFRGVKGEKGE) the composition is skewed to basic and acidic residues.

As to quaternary structure, forms homodimers and homotrimers. Binds to the fibrillized forms of amyloid-beta protein 40 (beta-APP40) and amyloid-betad protein 42 (beta-APP42). Found associated with beta-APP42 more frequently than with beta-APP40. In terms of processing, undergoes proteolytic cleavage by furin protease to yield the soluble collagen-like Alzheimer amyloid plaque component. Post-translationally, glycosylated. Hydroxylated on proline and lysine residues. Expressed predominantly in neurons with low levels also detected in heart, testis and eye.

It is found in the membrane. Its function is as follows. Inhibits fibrillization of amyloid-beta peptide during the elongation phase. Has also been shown to assemble amyloid fibrils into protease-resistant aggregates. Binds heparin. In Mus musculus (Mouse), this protein is Collagen alpha-1(XXV) chain.